A 140-amino-acid chain; its full sequence is Nucleoside diphosphate kinase (140 aa).

The ATP site is built by K11, F59, R87, T93, R104, and N114. H117 serves as the catalytic Pros-phosphohistidine intermediate.

Belongs to the NDK family. As to quaternary structure, homotetramer. Mg(2+) serves as cofactor.

It is found in the cytoplasm. It carries out the reaction a 2'-deoxyribonucleoside 5'-diphosphate + ATP = a 2'-deoxyribonucleoside 5'-triphosphate + ADP. It catalyses the reaction a ribonucleoside 5'-diphosphate + ATP = a ribonucleoside 5'-triphosphate + ADP. Its function is as follows. Major role in the synthesis of nucleoside triphosphates other than ATP. The ATP gamma phosphate is transferred to the NDP beta phosphate via a ping-pong mechanism, using a phosphorylated active-site intermediate. This chain is Nucleoside diphosphate kinase, found in Gluconacetobacter diazotrophicus (strain ATCC 49037 / DSM 5601 / CCUG 37298 / CIP 103539 / LMG 7603 / PAl5).